Consider the following 110-residue polypeptide: uncharacterized protein (110 aa).

Positions 85 to 110 (ARKAERPSQGGKDYNGTAKSAQSTTV) are disordered. Positions 101 to 110 (TAKSAQSTTV) are enriched in polar residues.

This is an uncharacterized protein from Saccharomyces cerevisiae (strain ATCC 204508 / S288c) (Baker's yeast).